We begin with the raw amino-acid sequence, 199 residues long: Pyridoxal 5'-phosphate synthase subunit PdxT (199 aa).

Gly52–Ser54 provides a ligand contact to L-glutamine. Residue Cys84 is the Nucleophile of the active site. L-glutamine is bound by residues Arg115 and Ile143 to Arg144. Catalysis depends on charge relay system residues His179 and Glu181.

It belongs to the glutaminase PdxT/SNO family. As to quaternary structure, in the presence of PdxS, forms a dodecamer of heterodimers. Only shows activity in the heterodimer.

It catalyses the reaction aldehydo-D-ribose 5-phosphate + D-glyceraldehyde 3-phosphate + L-glutamine = pyridoxal 5'-phosphate + L-glutamate + phosphate + 3 H2O + H(+). The catalysed reaction is L-glutamine + H2O = L-glutamate + NH4(+). It functions in the pathway cofactor biosynthesis; pyridoxal 5'-phosphate biosynthesis. Catalyzes the hydrolysis of glutamine to glutamate and ammonia as part of the biosynthesis of pyridoxal 5'-phosphate. The resulting ammonia molecule is channeled to the active site of PdxS. The protein is Pyridoxal 5'-phosphate synthase subunit PdxT of Methanosarcina mazei (strain ATCC BAA-159 / DSM 3647 / Goe1 / Go1 / JCM 11833 / OCM 88) (Methanosarcina frisia).